The primary structure comprises 183 residues: Dual-action ribosomal maturation protein DarP (183 aa).

The protein belongs to the DarP family.

The protein localises to the cytoplasm. Its function is as follows. Member of a network of 50S ribosomal subunit biogenesis factors which assembles along the 30S-50S interface, preventing incorrect 23S rRNA structures from forming. Promotes peptidyl transferase center (PTC) maturation. This is Dual-action ribosomal maturation protein DarP from Shigella flexneri.